A 153-amino-acid polypeptide reads, in one-letter code: NAD(P)H-quinone oxidoreductase subunit N (153 aa).

Belongs to the complex I NdhN subunit family. NDH-1 can be composed of about 15 different subunits; different subcomplexes with different compositions have been identified which probably have different functions.

The protein resides in the cellular thylakoid membrane. The catalysed reaction is a plastoquinone + NADH + (n+1) H(+)(in) = a plastoquinol + NAD(+) + n H(+)(out). It catalyses the reaction a plastoquinone + NADPH + (n+1) H(+)(in) = a plastoquinol + NADP(+) + n H(+)(out). In terms of biological role, NDH-1 shuttles electrons from an unknown electron donor, via FMN and iron-sulfur (Fe-S) centers, to quinones in the respiratory and/or the photosynthetic chain. The immediate electron acceptor for the enzyme in this species is believed to be plastoquinone. Couples the redox reaction to proton translocation, and thus conserves the redox energy in a proton gradient. Cyanobacterial NDH-1 also plays a role in inorganic carbon-concentration. This chain is NAD(P)H-quinone oxidoreductase subunit N, found in Parasynechococcus marenigrum (strain WH8102).